The sequence spans 95 residues: Co-chaperonin GroES (95 aa).

It belongs to the GroES chaperonin family. In terms of assembly, heptamer of 7 subunits arranged in a ring. Interacts with the chaperonin GroEL.

The protein localises to the cytoplasm. Its function is as follows. Together with the chaperonin GroEL, plays an essential role in assisting protein folding. The GroEL-GroES system forms a nano-cage that allows encapsulation of the non-native substrate proteins and provides a physical environment optimized to promote and accelerate protein folding. GroES binds to the apical surface of the GroEL ring, thereby capping the opening of the GroEL channel. This chain is Co-chaperonin GroES, found in Rickettsia bellii (strain RML369-C).